The following is a 132-amino-acid chain: Small ribosomal subunit protein uS8 (132 aa).

It belongs to the universal ribosomal protein uS8 family. As to quaternary structure, part of the 30S ribosomal subunit. Contacts proteins S5 and S12.

One of the primary rRNA binding proteins, it binds directly to 16S rRNA central domain where it helps coordinate assembly of the platform of the 30S subunit. The protein is Small ribosomal subunit protein uS8 of Bradyrhizobium sp. (strain ORS 278).